Here is a 1585-residue protein sequence, read N- to C-terminus: Sterol 3-beta-glucosyltransferase (1585 aa).

The segment covering 1-18 (MSPPISPTPPPLQPPFPP) has biased composition (pro residues). 3 disordered regions span residues 1–151 (MSPP…ESSF), 177–225 (PWEE…PTHT), and 249–279 (YQYA…LPKG). Polar residues-rich tracts occupy residues 65–92 (DQAT…NAIT), 105–123 (DAQT…STHE), and 132–148 (PRTS…QMAE). Residues 178 to 194 (WEEDDDSDDGEDDDEFI) are compositionally biased toward acidic residues. Positions 255-273 (ETSSRRTSAAGSESSSEGE) are enriched in low complexity. Positions 387–555 (ERLMEVFGLE…EAIVDVEKSP (169 aa)) constitute a GRAM 1 domain. The 93-residue stretch at 438-530 (LLVKSGPLHK…WVKAIQKVMF (93 aa)) folds into the PH domain. 2 disordered regions span residues 625 to 645 (TSHA…LGMA) and 666 to 852 (DGEP…GSES). Residues 670-689 (LEEHSQGPHHNDEDASHLPH) show a composition bias toward basic and acidic residues. Composition is skewed to polar residues over residues 760 to 785 (TDSS…QASV), 806 to 817 (NKPSVVDSNSAE), and 827 to 840 (SWTS…QMVK). Positions 862 to 933 (RKFRTFFALS…RDLYGLKAQK (72 aa)) constitute a GRAM 2 domain. Residues Ser-1043, Arg-1044, Asp-1046, Ile-1358, His-1360, His-1373, Gly-1377, Thr-1378, Asp-1397, and Gln-1398 each coordinate UDP-alpha-D-glucose. Residues 1499-1552 (NRVRSRSRSRSRSSQGRFSPRRHTVDDDGWSVVSGGSRSRSGSASAVTSPERRP) form a disordered region. Low complexity predominate over residues 1529–1545 (SVVSGGSRSRSGSASAV).

The protein belongs to the glycosyltransferase 28 family.

Its subcellular location is the cytoplasm. The protein localises to the membrane. The enzyme catalyses a sterol + UDP-alpha-D-glucose = a sterol 3-beta-D-glucoside + UDP + H(+). It carries out the reaction ergosterol + UDP-alpha-D-glucose = ergosteryl 3-beta-D-glucoside + UDP + H(+). Functionally, sterol glycosyltransferase responsible for the glycosylation of ergosterol to form ergosterol-glucoside. This is Sterol 3-beta-glucosyltransferase from Cryptococcus neoformans var. neoformans serotype D (strain B-3501A) (Filobasidiella neoformans).